Reading from the N-terminus, the 140-residue chain is Large ribosomal subunit protein bL17 (140 aa).

A disordered region spans residues 120–140; sequence EDAKGQDSGPVMVDEDDFAEA.

It belongs to the bacterial ribosomal protein bL17 family. Part of the 50S ribosomal subunit. Contacts protein L32.

The polypeptide is Large ribosomal subunit protein bL17 (Erythrobacter litoralis (strain HTCC2594)).